The chain runs to 63 residues: Small ribosomal subunit protein bS21 (63 aa).

It belongs to the bacterial ribosomal protein bS21 family.

The chain is Small ribosomal subunit protein bS21 from Parabacteroides distasonis (strain ATCC 8503 / DSM 20701 / CIP 104284 / JCM 5825 / NCTC 11152).